Consider the following 481-residue polypeptide: MHTHNHFKTPSDAEEVDDLDDEMVMGVIAEIEQEVLFESDSDDDGFGAEQLGAPPPDDDNDQISSSDDSFDPNAEDSDSDDSMQHEEQAQATSAKRRKDDDGPSGSNRDVETNFDLDLEDETDETVRAIIAAIKKPRSAPPEIKLEDFVTDISFHPERNIIALATIIGDVHLYEYANEGNKLIRTIEVHSKACRDVEFTEDGRNLLTCSKDKCVMVTDMETEKLKKLYETAHDDAINTLHVLNENLFATGDDAGTVKLWDLRTKQHVFELKQIDDQVTQLLSNEQNTLLLATSADGYLTTFNIPGRKLYVQSEPYEEELNCMGIYRGDSKLVVGTSKGKLYSYNWGSFGYHCDMYPGIKSPISLMIPITDRIACVAGEDGNIRACHITPYRNLGVVGQHNMPIEALDVNSTGELLASSSHNNDVRFWNVKYFEDFGDIKYNEKHNAYKEQRHNLPSSKCTNTGDFFADLAKQEDDEDDDAT.

Positions 1–116 (MHTHNHFKTP…NRDVETNFDL (116 aa)) are disordered. 3 stretches are compositionally biased toward acidic residues: residues 12-23 (DAEEVDDLDDEM), 31-46 (IEQE…DDGF), and 68-81 (DSFD…DSDD). WD repeat units follow at residues 144-183 (KLED…NKLI), 188-227 (VHSK…LKKL), 231-269 (AHDD…HVFE), 272-311 (QIDD…LYVQ), 314-353 (PYEE…YHCD), and 398-437 (QHNM…DFGD).

This sequence belongs to the WD repeat WDR55 family.

The polypeptide is WD repeat-containing protein 55 homolog (Drosophila ananassae (Fruit fly)).